A 1583-amino-acid chain; its full sequence is MFLCFCTAPILCLWINSGGAVVVSNESLVVCEPVSYPYSLQVLRSFSQRVNLRTKRAVTTDAWSFAYQISTSSLNVNGWYVNFTSPLGWSYPNGKLFGIVLGSDAMMRASVSTFTYDVISYVGQRPNLDCQINDLANGGLESRYSTVRVDNCGNYPCHGGGKPGCSIGHPYMANGVRTRVLLTTQSPGIQYEIYSGQDYAVYQITPYTQYTVTMPSGTSGYCQQTPLYVECGSWTPYRVHAYGCDKATQSCNYTISSDWVVAFKSKASAIILRSQLIVALAQKLSRTVGVNKAVYFWFLKQPYHYLSLVNFSPNYALFSPLCKSLRQQSATYSALSYGSPFFVAQECYNNALYLPDCCLYTLFSILFSWDYQVNYPVNNVLQANETFLQLPTTGYLGQTVSQGRMLNLFKDAIVFLDFYDTKFYRTNDGPGGDIFAVVVKQVPVIAYSAFRIEQQTGYLAVKCNGVIQATLAPHSSRVVLLARHMSMWSIAAANSTTIYCPIYTLTSFVRLDISTSWYFHTLAQPSGPIQQVSMPVLSTGAAGVYMHPMIEHWVTLLAQSSVYQPSMFNMGVNKSVTLTTQLQAYAQVYTAWFLSILYTRLPESRRLTLGAQLTPFIQALLSFKQADIDATDVDTVARYNVLILMWGRKYAAVIYNQLPEWSYPLFKGGVGDSMWFRKKFLVTTKIHQTASHFPFIAGYLDFLDYKYIPKYKDVACPLSTMVPSILQVYETPQLFVIIVQCVSTTYSWYPGLRNPHTIYRSYKLGTICVLVPYSSPTDVYSSFGFFFQSALTIPTVQTTDDILPGCVGFVQDSVFTPCHPSGCPVRNSYDNYIICPGSSASNYTLRNYYRTTTPVTNVPIEEVPLQLEIPTVSLTSYELKQSESVLLQDIEGGIVVDHNTGSIWYPGGQAYDVSFYVSVIIRYAPPKLELPSTLANFTSCLDYICFGNQQCRGEAQTFCTSMDYFEQVFNKSLTSLITALQDLHYVLKLVLPETTLELTEDTRRRRRAVDEFSDTISLLSESFERFMSPASQAYMANMMWWDEAFDGISLPQRTGSILSSAPSLSSISSWHSYSSRTPLISNVKTPKTTFNVKLSMPKLPKASTLSTIGSVLSSGLSIASLGLSIFSIIEDRRVIELTQQQIMALEDQITILAGYTTKNFEEIQSSLNTLGQQVQDFSQTSALSLQQLSNGFEQITQQLDKSIYYVMAVQQYATYMSSLVNQLNELSQAVYKTQDMYITCIHSLQSGVLSPNCITPFQICHLYQVAKNLSSGECQPILSEREISRFYSLPLVTDAMVHNDTYWFSWSIPITCSNILGSVYKVQPGYIVNPHHPTSLQYDVPTHVVTSNAGALIFDEHYCDRYNQVYLCTKSAFDLAEASYLTMLYSNQTDNSSLTFHPAPRPDPCVYLSASALYCYYSDECHQCVIAVGNCTNRTVTYENYTYPIMDPQCRGFDQITISSPIAIGADFTALPSRPPLPLHLSYVNVTFNVTLPNELNWTDLVLDYSFKDKVYEISKNITQLHEQILQVSNWASGWFQRLRDFLYGLIPAWITWLTLGFSLFSILISGVNIILFFEMNGKVKKS.

The N-terminal stretch at 1–20 is a signal peptide; sequence MFLCFCTAPILCLWINSGGA. The Virion surface segment spans residues 21 to 1553; that stretch reads VVVSNESLVV…YGLIPAWITW (1533 aa). N-linked (GlcNAc...) asparagine; by host glycans are attached at residues N25, N82, N252, N384, N494, N573, N842, N936, N970, N1268, N1299, N1387, N1391, N1430, N1433, N1440, N1485, N1489, N1497, and N1517. The helical transmembrane segment at 1554 to 1574 threads the bilayer; the sequence is LTLGFSLFSILISGVNIILFF. The Intravirion segment spans residues 1575–1583; it reads EMNGKVKKS.

This sequence belongs to the torovirinae spike protein family. In terms of assembly, homotrimer.

It is found in the virion membrane. Mediates the binding of virions to the host cell receptor and is involved in membrane fusion. In Breda virus 1 (BRV-1), this protein is Spike glycoprotein (S).